Reading from the N-terminus, the 118-residue chain is Beta-2-microglobulin (118 aa).

Positions 1–20 are cleaved as a signal peptide; it reads MARVVALVLLGLLSLTGLEA. Residues 25–111 form the Ig-like C1-type domain; it reads PKVQVYSRHP…QHSTLKEPLI (87 aa). Cys-45 and Cys-99 form a disulfide bridge.

This sequence belongs to the beta-2-microglobulin family. In terms of assembly, heterodimer of an alpha chain and a beta chain. Beta-2-microglobulin is the beta-chain of major histocompatibility complex class I molecules.

Its subcellular location is the secreted. Its function is as follows. Component of the class I major histocompatibility complex (MHC). Involved in the presentation of peptide antigens to the immune system. This Equus asinus (Donkey) protein is Beta-2-microglobulin (B2M).